Consider the following 590-residue polypeptide: Multidrug resistance ABC transporter ATP-binding and permease protein (590 aa).

A run of 6 helical transmembrane segments spans residues 35-55 (YLFF…QLQV), 79-99 (IALY…LGIF), 150-170 (IPQA…MLQM), 176-196 (LAMI…MTFG), 261-281 (VMML…IYLI), and 292-312 (LGMM…ATFF). One can recognise an ABC transmembrane type-1 domain in the interval 38–317 (FIIGILAGIV…VATFFTELAK (280 aa)). In terms of domain architecture, ABC transporter spans 349-584 (LSARHVDFAY…HPLYAKYVSE (236 aa)). 382–389 (GPSGGGKS) contributes to the ATP binding site.

It belongs to the ABC transporter superfamily. Multidrug exporter LmrA (TC 3.A.1.117.1) family. In terms of assembly, homodimer.

The protein localises to the cell membrane. The catalysed reaction is ATP + H2O + xenobioticSide 1 = ADP + phosphate + xenobioticSide 2.. In terms of biological role, efflux transporter for a variety of amphiphilic cationic compounds, including antibiotics. The sequence is that of Multidrug resistance ABC transporter ATP-binding and permease protein (lmrA) from Lactococcus lactis subsp. lactis (strain IL1403) (Streptococcus lactis).